Here is a 196-residue protein sequence, read N- to C-terminus: Anthranilate synthase component 2 (196 aa).

The Glutamine amidotransferase type-1 domain maps to 3–196 (NIVFIDNFDS…IEWALEKNNA (194 aa)). 57–59 (GPG) contacts L-glutamine. C84 functions as the Nucleophile; for GATase activity in the catalytic mechanism. L-glutamine contacts are provided by residues Q88 and 134–135 (SL). Catalysis depends on for GATase activity residues H170 and E172.

Heterotetramer consisting of two non-identical subunits: a beta subunit (TrpG) and a large alpha subunit (TrpE).

It carries out the reaction chorismate + L-glutamine = anthranilate + pyruvate + L-glutamate + H(+). It functions in the pathway amino-acid biosynthesis; L-tryptophan biosynthesis; L-tryptophan from chorismate: step 1/5. In terms of biological role, part of a heterotetrameric complex that catalyzes the two-step biosynthesis of anthranilate, an intermediate in the biosynthesis of L-tryptophan. In the first step, the glutamine-binding beta subunit (TrpG) of anthranilate synthase (AS) provides the glutamine amidotransferase activity which generates ammonia as a substrate that, along with chorismate, is used in the second step, catalyzed by the large alpha subunit of AS (TrpE) to produce anthranilate. In the absence of TrpG, TrpE can synthesize anthranilate directly from chorismate and high concentrations of ammonia. This is Anthranilate synthase component 2 (trpG) from Vibrio parahaemolyticus serotype O3:K6 (strain RIMD 2210633).